The following is a 199-amino-acid chain: Transmembrane protein 9B (199 aa).

Positions Met1–Ala34 are cleaved as a signal peptide. A glycan (N-linked (GlcNAc...) asparagine) is linked at Asn61. A helical transmembrane segment spans residues Ile106–Val126. Phosphoserine is present on residues Ser143 and Ser190.

This sequence belongs to the TMEM9 family. Post-translationally, N-glycosylated.

The protein resides in the lysosome membrane. It is found in the early endosome membrane. Functionally, enhances production of pro-inflammatory cytokines induced by TNF, IL1B, and TLR ligands. Has a role in TNF activation of both the NF-kappaB and MAPK pathways. The sequence is that of Transmembrane protein 9B (Tmem9b) from Mus musculus (Mouse).